The chain runs to 468 residues: Putative FBD-associated F-box protein At5g22720 (468 aa).

In terms of domain architecture, F-box spans 22–68; that stretch reads EDLISQLPDSLITQILFYLQTKKAVTTSVLSKRWRSLWLSTPGLVLI. The 59-residue stretch at 375–433 folds into the FBD domain; sequence ELRLSFVPRCLLSSLEFVEIKGCSRSNMERVKYVGEPIETKLARYFVENSTILKKLVLP.

This is Putative FBD-associated F-box protein At5g22720 from Arabidopsis thaliana (Mouse-ear cress).